The chain runs to 427 residues: Transcriptional enhancer factor TEF-3 (427 aa).

The tract at residues 1–32 (MTSNEWSSPDSPEGSSISGGSQALDKPIDNDA) is disordered. Over residues 7–21 (SSPDSPEGSSISGGS) the composition is skewed to low complexity. A DNA-binding region (TEA) is located at residues 29–105 (DNDAEGVWSP…QVLARRKARE (77 aa)). The Nuclear localization signal motif lies at 78-94 (IKLRTGKTRTRKQVSSH). Positions 163 to 206 (QPGTSHDVKPFSQNTYPVQPPLPLPGFESPAGPTPSPSAPLAPP) are disordered. Over residues 194–205 (GPTPSPSAPLAP) the composition is skewed to pro residues.

As to quaternary structure, interacts with WWTR1/TAZ. Interacts with YAP1. Preferentially expressed in lung and in skeletal muscle.

Its subcellular location is the nucleus. Transcription factor which plays a key role in the Hippo signaling pathway, a pathway involved in organ size control and tumor suppression by restricting proliferation and promoting apoptosis. The core of this pathway is composed of a kinase cascade wherein MST1/MST2, in complex with its regulatory protein SAV1, phosphorylates and activates LATS1/2 in complex with its regulatory protein MOB1, which in turn phosphorylates and inactivates YAP1 oncoprotein and WWTR1/TAZ. Acts by mediating gene expression of YAP1 and WWTR1/TAZ, thereby regulating cell proliferation, migration and epithelial mesenchymal transition (EMT) induction. Binds specifically and non-cooperatively to the Sph and GT-IIC 'enhansons' (5'-GTGGAATGT-3') and activates transcription. Binds to the M-CAT motif. Might play a role in the embryonic development of skeletal muscle. The chain is Transcriptional enhancer factor TEF-3 (Tead4) from Mus musculus (Mouse).